The following is a 376-amino-acid chain: General transcription factor IIH subunit 2 (376 aa).

A VWFA domain is found at 64 to 206 (HVMIVIDCSR…NIRCSAIGLS (143 aa)). A C4-type zinc finger spans residues 286–303 (CTQCGARHCSIPAECPVC).

This sequence belongs to the GTF2H2 family. In terms of assembly, component of the 7-subunit TFIIH core complex composed of xpb-1, xpd-1, gtf-2H1, gtf-2H2C, gtf-2H3, Y73F8A.24 and gtf-2H5, which is active in NER. The core complex associates with the 3-subunit CDK-activating kinase (CAK) module composed of cyh-1, cdk-7 and mnat-1 to form the 10-subunit holoenzyme (holo-TFIIH) active in transcription.

It is found in the nucleus. Its function is as follows. Component of the general transcription and DNA repair factor IIH (TFIIH) core complex, which is involved in general and transcription-coupled nucleotide excision repair (NER) of damaged DNA and, when complexed to CAK, in RNA transcription by RNA polymerase II. In NER, TFIIH acts by opening DNA around the lesion to allow the excision of the damaged oligonucleotide and its replacement by a new DNA fragment. In transcription, TFIIH has an essential role in transcription initiation. When the pre-initiation complex (PIC) has been established, TFIIH is required for promoter opening and promoter escape. Phosphorylation of the C-terminal tail (CTD) of the largest subunit of RNA polymerase II by the kinase module CAK controls the initiation of transcription. The sequence is that of General transcription factor IIH subunit 2 from Caenorhabditis elegans.